The following is an 886-amino-acid chain: DNA double-strand break repair Rad50 ATPase (886 aa).

ATP contacts are provided by residues R13, 33–39 (NGAGKSS), and Q128. Coiled coils occupy residues 183-360 (EQIK…LLET) and 400-433 (KEIT…LKSA). The Zinc-hook domain occupies 392 to 489 (LSKAKEEEKE…RLEKVEKALE (98 aa)). Zn(2+) contacts are provided by C437 and C440. 2 coiled-coil regions span residues 489–518 (EKQE…DAEK) and 545–713 (SSAS…KKVE). 792 to 797 (FLSGGE) contributes to the ATP binding site.

This sequence belongs to the SMC family. RAD50 subfamily. In terms of assembly, homodimer. Forms a heterotetramer composed of two Mre11 subunits and two Rad50 subunits. Zn(2+) serves as cofactor.

In terms of biological role, part of the Rad50/Mre11 complex, which is involved in the early steps of DNA double-strand break (DSB) repair. The complex may facilitate opening of the processed DNA ends to aid in the recruitment of HerA and NurA. Rad50 controls the balance between DNA end bridging and DNA resection via ATP-dependent structural rearrangements of the Rad50/Mre11 complex. The sequence is that of DNA double-strand break repair Rad50 ATPase from Archaeoglobus fulgidus (strain ATCC 49558 / DSM 4304 / JCM 9628 / NBRC 100126 / VC-16).